Here is a 193-residue protein sequence, read N- to C-terminus: Phosphoheptose isomerase (193 aa).

The SIS domain maps to 37–193; it reads LADSFKVGGK…QLIEKEMVKA (157 aa). Residue 52–54 participates in substrate binding; the sequence is NGG. The Zn(2+) site is built by H61 and E65. Substrate is bound by residues E65, 93–94, 119–121, S124, and Q172; these read ND and STS. Zn(2+)-binding residues include Q172 and H180.

Belongs to the SIS family. GmhA subfamily. In terms of assembly, homotetramer. It depends on Zn(2+) as a cofactor.

The protein localises to the cytoplasm. It carries out the reaction 2 D-sedoheptulose 7-phosphate = D-glycero-alpha-D-manno-heptose 7-phosphate + D-glycero-beta-D-manno-heptose 7-phosphate. It participates in carbohydrate biosynthesis; D-glycero-D-manno-heptose 7-phosphate biosynthesis; D-glycero-alpha-D-manno-heptose 7-phosphate and D-glycero-beta-D-manno-heptose 7-phosphate from sedoheptulose 7-phosphate: step 1/1. It functions in the pathway bacterial outer membrane biogenesis; LPS core biosynthesis. Functionally, catalyzes the isomerization of sedoheptulose 7-phosphate in D-glycero-D-manno-heptose 7-phosphate. The polypeptide is Phosphoheptose isomerase (Photorhabdus laumondii subsp. laumondii (strain DSM 15139 / CIP 105565 / TT01) (Photorhabdus luminescens subsp. laumondii)).